The following is a 279-amino-acid chain: Tumor protein p63-regulated gene 1 protein (279 aa).

A disordered region spans residues 1 to 49; sequence MSTIGSFDGFQPVSLKQEEEDQPSENDHLSTKEGNSGKDPGSRRISRQQ. Residues 72–259 form the hSac2 domain; that stretch reads VTRPGAIETA…ILIETYTGLM (188 aa).

This sequence belongs to the TPRG1 family. Highly expressed in skin. Also detected at low levels in tongue and esophagus.

The protein resides in the cytoplasm. The sequence is that of Tumor protein p63-regulated gene 1 protein from Mus musculus (Mouse).